We begin with the raw amino-acid sequence, 1059 residues long: Isoleucine--tRNA ligase (1059 aa).

The 'HIGH' region signature appears at 47–57 (PYTTGHIHLGT). Residues 591–595 (KMSKS) carry the 'KMSKS' region motif. K594 contacts ATP.

This sequence belongs to the class-I aminoacyl-tRNA synthetase family. IleS type 2 subfamily. Monomer. Zn(2+) serves as cofactor.

It is found in the cytoplasm. The catalysed reaction is tRNA(Ile) + L-isoleucine + ATP = L-isoleucyl-tRNA(Ile) + AMP + diphosphate. Catalyzes the attachment of isoleucine to tRNA(Ile). As IleRS can inadvertently accommodate and process structurally similar amino acids such as valine, to avoid such errors it has two additional distinct tRNA(Ile)-dependent editing activities. One activity is designated as 'pretransfer' editing and involves the hydrolysis of activated Val-AMP. The other activity is designated 'posttransfer' editing and involves deacylation of mischarged Val-tRNA(Ile). In Methanoculleus marisnigri (strain ATCC 35101 / DSM 1498 / JR1), this protein is Isoleucine--tRNA ligase.